We begin with the raw amino-acid sequence, 100 residues long: C-X-C motif chemokine 2 (100 aa).

Positions 1-27 (MAPPTCRLLSAALVLLLLLATNHQATG) are cleaved as a signal peptide. Disulfide bonds link C36/C62 and C38/C78.

Belongs to the intercrine alpha (chemokine CxC) family. As to quaternary structure, homotetramer.

It localises to the secreted. Chemotactic for human polymorphonuclear leukocytes but does not induce chemokinesis or an oxidative burst. This chain is C-X-C motif chemokine 2 (Cxcl2), found in Mus musculus (Mouse).